Reading from the N-terminus, the 452-residue chain is BUB3-interacting and GLEBS motif-containing protein ZNF207 (452 aa).

Residues 1–92 (MGRKKKKQLK…EGIPEKDMEE (92 aa)) form a microtubule-binding region region. C2H2-type zinc fingers lie at residues 11-34 (PWCWYCNRDFDDEKILIQHQKAKH) and 35-58 (FKCHICHKKLYTGPGLAIHCMQVH). 2 disordered regions span residues 99-131 (QKTQVDGQKKKTNQDDSDYDDDDDTAPSTSFQQ) and 298-330 (STMSTTSTTNSTASKPSTSITSKPATLTTTSAT). Residues 113-123 (DDSDYDDDDDT) show a composition bias toward acidic residues. Residues 329–361 (ATSKLVHPDEDISLEEKRAQLPKYQRNLPRPGQ) form a GLEBS region.

In terms of assembly, interacts (via GLEBS region) with bub3.

It localises to the nucleus. Its subcellular location is the chromosome. The protein resides in the centromere. The protein localises to the kinetochore. It is found in the cytoplasm. It localises to the cytoskeleton. Its subcellular location is the spindle. In terms of biological role, kinetochore- and microtubule-binding protein that plays a key role in spindle assembly. Znf207/BuGZ is mainly composed of disordered low-complexity regions and undergoes phase transition or coacervation to form temperature-dependent liquid droplets. Coacervation promotes microtubule bundling and concentrates tubulin, promoting microtubule polymerization and assembly of spindle and spindle matrix by concentrating its building blocks. This chain is BUB3-interacting and GLEBS motif-containing protein ZNF207, found in Xenopus laevis (African clawed frog).